Here is a 153-residue protein sequence, read N- to C-terminus: Histone H2B.3 (153 aa).

Composition is skewed to basic and acidic residues over residues 1 to 28 (MAPK…EKAL) and 36 to 53 (EKRL…EGRK). The interval 1–61 (MAPKAEKKPA…RKAGRKKAKK (61 aa)) is disordered. 2 positions are modified to N6-acetyllysine: K7 and K37. A Glycyl lysine isopeptide (Lys-Gly) (interchain with G-Cter in ubiquitin) cross-link involves residue K149.

This sequence belongs to the histone H2B family. The nucleosome is a histone octamer containing two molecules each of H2A, H2B, H3 and H4 assembled in one H3-H4 heterotetramer and two H2A-H2B heterodimers. The octamer wraps approximately 147 bp of DNA. Post-translationally, can be acetylated to form H2BK6ac and H2BK33ac. Monoubiquitinated by BRE1 to form H2BK143ub1 and deubiquitinated by UBP26. Required for heterochromatic histone H3 di- and trimethylation at H3K4me. May give a specific tag for epigenetic transcriptional activation.

It is found in the nucleus. The protein resides in the chromosome. In terms of biological role, core component of nucleosome. Nucleosomes wrap and compact DNA into chromatin, limiting DNA accessibility to the cellular machineries which require DNA as a template. Histones thereby play a central role in transcription regulation, DNA repair, DNA replication and chromosomal stability. DNA accessibility is regulated via a complex set of post-translational modifications of histones, also called histone code, and nucleosome remodeling. In Oryza sativa subsp. indica (Rice), this protein is Histone H2B.3 (H2B.3).